Reading from the N-terminus, the 130-residue chain is MKILVAVAVFFLVSTQLSAEEIGANDDLNYWSDWSDSDQIKEALPEPFEHILQRIARRPKPQQFFGLMGKRDADSSIEKQVALLKALYGHGQISHKRHKTDSFVGLMGKRALNSVAFERSAMQNYERRRK.

The first 19 residues, 1 to 19 (MKILVAVAVFFLVSTQLSA), serve as a signal peptide directing secretion. A propeptide spanning residues 20-56 (EEIGANDDLNYWSDWSDSDQIKEALPEPFEHILQRIA) is cleaved from the precursor. Methionine amide occurs at positions 68 and 107.

This sequence belongs to the tachykinin family. Post-translationally, the substance P form is cleaved at Pro-59 by the prolyl endopeptidase FAP (seprase) activity (in vitro). Substance P is also cleaved and degraded by Angiotensin-converting enzyme (ACE) and neprilysin (MME).

It localises to the secreted. Its function is as follows. Tachykinins are active peptides which excite neurons, evoke behavioral responses, are potent vasodilators and secretagogues, and contract (directly or indirectly) many smooth muscles. In Mesocricetus auratus (Golden hamster), this protein is Protachykinin-1 (TAC1).